The chain runs to 1011 residues: Unconventional myosin ID (1011 aa).

The Myosin motor domain occupies 7–690; that stretch reads AGVQDFVLLD…TLFALEHQRN (684 aa). 100 to 107 lines the ATP pocket; that stretch reads GESGAGKT. The tract at residues 567-589 is actin-binding; it reads MADLVVTLLKKEPFYVRCIKPND. IQ domains are found at residues 694-714 and 716-736; these read PHIV…RNFK and MKAA…SYVQ. Residues 806–1007 enclose the TH1 domain; it reads AGRRPYWGQA…EGNIIFEVPA (202 aa).

This sequence belongs to the TRAFAC class myosin-kinesin ATPase superfamily. Myosin family. As to quaternary structure, binds to F-actin. Interacts with arm. Interacts with shg. Interacts with ds (via intracellular region). As to expression, in the embryo, expressed in gastric caeca, midgut cells of the proventriculus, and in the mid and hindgut. In the larval gut brush border, expression is in the terminal web domain. In the adult gut brush border, expression remains in the web domain and has also moved into the microvilli. Also expressed at low levels in follicle cells during oogenesis.

Its subcellular location is the cytoplasm. The protein localises to the cell cortex. The protein resides in the cytoskeleton. It is found in the cell membrane. It localises to the cell junction. Its subcellular location is the adherens junction. The protein localises to the cell projection. Functionally, unconventional myosin that functions as actin-based motor protein with ATPase activity. Binds to membranes enriched in phosphatidylinositol 4-5-bisphosphate, and can glide along actin filaments when anchored to a lipid bilayer. Generates left-right asymmetry at the level of single cells, organs and the whole body via its interaction with the actin cytoskeleton, both in the embryo and the adult. Normal left-right asymmetry of the larval midgut and hindgut requires expression in the embryonic hindgut epithelium during a critical time period, 10 to 12.75 hours after egg laying. This period corresponds to a late stage of germband retraction, and precedes left-right asymmetric morphogenesis. Expression in segment H1 of the imaginal ring is required at 0 to 24 hours after pupation for changes of cell shape and orientation in the H2 segment, which then gives rise to normal, dextral looping of the adult hindgut. Required during a critical period, 126-132 hours after egg laying, for normal, dextral rotation of the adult male genitalia. Has a double role by promoting dextral rotation in the posterior compartment of segment A8 of the male genital disk, and in repressing sinistral looping in the anterior compartment. This is Unconventional myosin ID from Drosophila melanogaster (Fruit fly).